A 439-amino-acid polypeptide reads, in one-letter code: GTPase Der (439 aa).

2 consecutive EngA-type G domains span residues 4 to 168 (PIVA…KDDE) and 177 to 352 (INIA…DNYN). Residues 10–17 (GRPNVGKS), 57–61 (DTGGI), 120–123 (NKID), 183–190 (GKPNVGKS), 230–234 (DTAGL), and 295–298 (NKWD) each bind GTP. Positions 353–437 (KRVKTGVLND…GIKSEFRERK (85 aa)) constitute a KH-like domain.

This sequence belongs to the TRAFAC class TrmE-Era-EngA-EngB-Septin-like GTPase superfamily. EngA (Der) GTPase family. As to quaternary structure, associates with the 50S ribosomal subunit.

GTPase that plays an essential role in the late steps of ribosome biogenesis. This is GTPase Der from Clostridium botulinum (strain ATCC 19397 / Type A).